A 381-amino-acid chain; its full sequence is 6-oxocyclohex-1-ene-1-carbonyl-CoA hydrolase (381 aa).

Belongs to the enoyl-CoA hydratase/isomerase family. Homohexamer.

The catalysed reaction is 6-oxocyclohex-1-ene-1-carbonyl-CoA + 2 H2O = 3-hydroxy-6-carboxyhexanoyl-CoA + H(+). Its pathway is aromatic compound metabolism; benzoyl-CoA degradation. Involved in the central benzoyl-CoA catabolism. Catalyzes the addition of one molecule of water to the double bond and the hydrolytic cleavage of C-C bond in the alicyclic ring, 6-oxocyclohex-1-ene-1-carbonyl-CoA (6-OCH-CoA) to yield 3-hydroxypimelyl-CoA. In Geobacter metallireducens (strain ATCC 53774 / DSM 7210 / GS-15), this protein is 6-oxocyclohex-1-ene-1-carbonyl-CoA hydrolase.